Here is a 459-residue protein sequence, read N- to C-terminus: UDP-N-acetylmuramate--L-alanine ligase (459 aa).

Glycine 118–threonine 124 provides a ligand contact to ATP.

This sequence belongs to the MurCDEF family.

It is found in the cytoplasm. It catalyses the reaction UDP-N-acetyl-alpha-D-muramate + L-alanine + ATP = UDP-N-acetyl-alpha-D-muramoyl-L-alanine + ADP + phosphate + H(+). The protein operates within cell wall biogenesis; peptidoglycan biosynthesis. Functionally, cell wall formation. The protein is UDP-N-acetylmuramate--L-alanine ligase of Clostridium beijerinckii (strain ATCC 51743 / NCIMB 8052) (Clostridium acetobutylicum).